The following is a 145-amino-acid chain: Eukaryotic translation initiation factor 1A (145 aa).

Basic residues predominate over residues 1–15 (MPKNKGKGGKNRKRG). Residues 1–25 (MPKNKGKGGKNRKRGKNEADDDKRE) are disordered. The span at 16 to 25 (KNEADDDKRE) shows a compositional bias: basic and acidic residues. Residues 22-96 (DKRELVFKED…DKADVILKLM (75 aa)) enclose the S1-like domain.

The protein belongs to the eIF-1A family.

Seems to be required for maximal rate of protein biosynthesis. Enhances ribosome dissociation into subunits and stabilizes the binding of the initiator Met-tRNA(I) to 40 S ribosomal subunits. This Onobrychis viciifolia (Common sainfoin) protein is Eukaryotic translation initiation factor 1A.